A 549-amino-acid chain; its full sequence is Cation/acetate symporter ActP (549 aa).

13 helical membrane passes run 33-53 (WQAI…TYWA), 77-97 (LAIA…ALVF), 103-123 (GLIY…LIAE), 148-168 (ILSA…QMVG), 183-203 (IAVV…GMLA), 206-226 (WVQI…AFMV), 262-282 (ISAL…PHIL), 303-323 (GFMG…IMLV), 355-375 (LFLG…VAGL), 404-424 (VSKI…VLFE), 428-448 (IAFM…PIIL), 464-484 (GGWL…TIWV), and 493-513 (IFPY…GIWF).

Belongs to the sodium:solute symporter (SSF) (TC 2.A.21) family.

Its subcellular location is the cell inner membrane. Functionally, transports acetate. The sequence is that of Cation/acetate symporter ActP from Escherichia coli (strain ATCC 8739 / DSM 1576 / NBRC 3972 / NCIMB 8545 / WDCM 00012 / Crooks).